The sequence spans 297 residues: CASP-like protein 4A2 (297 aa).

The disordered stretch occupies residues 1–136 (MKMKRTVSSN…MNGEESATTA (136 aa)). At 1 to 149 (MKMKRTVSSN…ARRDDLVSVT (149 aa)) the chain is on the cytoplasmic side. Positions 8–19 (SSNSEAYSYNES) are enriched in low complexity. A compositionally biased stretch (pro residues) spans 69-83 (LPSPIPPPPPQIPPP). Over residues 93-121 (MNSSLDKSPSSMVVQNSWVREDGQQNTTR) the composition is skewed to polar residues. A helical membrane pass occupies residues 150-170 (ALGFRITEVILCVISFSIMAA). The Extracellular portion of the chain corresponds to 171–189 (DKTQGWSGDSYDRYKEYRY). A helical transmembrane segment spans residues 190–210 (CLAVNVIAFVYSAFEACDAAC). Topologically, residues 211–225 (YMAKESYMMNCGFHD) are cytoplasmic. Residues 226 to 246 (LFVFSMDQLLAYLLMSASSCA) form a helical membrane-spanning segment. Topologically, residues 247–265 (ATRVDDWVSNWGKDEFTQM) are extracellular. Residues 266 to 286 (ATASIAVSFLAFGAFAVSALI) traverse the membrane as a helical segment. At 287–297 (SSYRLFTHASS) the chain is on the cytoplasmic side.

It belongs to the Casparian strip membrane proteins (CASP) family. As to quaternary structure, homodimer and heterodimers.

The protein localises to the cell membrane. The polypeptide is CASP-like protein 4A2 (Arabidopsis lyrata subsp. lyrata (Lyre-leaved rock-cress)).